The chain runs to 79 residues: Short neurotoxin 4 (79 aa).

The N-terminal stretch at 1-21 (MKTLLLTLVMVTIMCLDLGYT) is a signal peptide. Disulfide bonds link cysteine 24–cysteine 41, cysteine 34–cysteine 59, and cysteine 63–cysteine 71.

This sequence belongs to the three-finger toxin family. Short-chain subfamily. Type III alpha-neurotoxin sub-subfamily. In terms of tissue distribution, expressed by the venom gland.

It is found in the secreted. Its function is as follows. Binds with high affinity to muscle nicotinic acetylcholine receptor (nAChR) and hinders acetylcholine binding to the receptor, thereby impairing neuromuscular transmission. Causes muscle paralysis, spasms and increased respiration. The sequence is that of Short neurotoxin 4 from Pseudonaja textilis (Eastern brown snake).